A 392-amino-acid chain; its full sequence is Multidrug resistance protein MdtL (392 aa).

Transmembrane regions (helical) follow at residues 4 to 24 (FLLC…MYLV), 38 to 58 (AQLH…MLFA), 69 to 89 (PVAI…AQVH), 95 to 115 (LIGR…AFAI), 131 to 151 (LLNG…HLIM), 158 to 178 (SLFY…VFIL), 209 to 229 (LLIT…SPVL), 246 to 266 (ALMA…LSLF), 270 to 290 (TLML…SLAT), 294 to 314 (VTLI…GVAM), 331 to 351 (VLGI…AIIG), and 357 to 377 (MLIG…LVVT).

It belongs to the major facilitator superfamily. DHA1 family. MdtL (TC 2.A.1.2.22) subfamily.

It is found in the cell inner membrane. This Klebsiella pneumoniae subsp. pneumoniae (strain ATCC 700721 / MGH 78578) protein is Multidrug resistance protein MdtL.